We begin with the raw amino-acid sequence, 345 residues long: N-acetyl-gamma-glutamyl-phosphate reductase (345 aa).

Cys-142 is an active-site residue.

The protein belongs to the NAGSA dehydrogenase family. Type 1 subfamily.

The protein localises to the cytoplasm. It carries out the reaction N-acetyl-L-glutamate 5-semialdehyde + phosphate + NADP(+) = N-acetyl-L-glutamyl 5-phosphate + NADPH + H(+). Its pathway is amino-acid biosynthesis; L-arginine biosynthesis; N(2)-acetyl-L-ornithine from L-glutamate: step 3/4. In terms of biological role, catalyzes the NADPH-dependent reduction of N-acetyl-5-glutamyl phosphate to yield N-acetyl-L-glutamate 5-semialdehyde. This Thermus thermophilus (strain ATCC BAA-163 / DSM 7039 / HB27) protein is N-acetyl-gamma-glutamyl-phosphate reductase.